Reading from the N-terminus, the 342-residue chain is Deoxyhypusine synthase regulatory subunit (342 aa).

Residues 72–76 (SNLIS), 98–100 (TAG), Glu-104, Asp-213, 282–283 (TG), and 316–317 (DA) each bind NAD(+).

This sequence belongs to the deoxyhypusine synthase family. In terms of assembly, heterotetramer formed by a homodimer of the non-catalytic regulatory subunit DHSp and a homodimer of the catalytic subunit DHSc where DHSc appears to bind spermidine and DHSp appears to bind NAD(+).

It participates in protein modification; eIF5A hypusination. Functionally, required for the activation and stability of deoxyhypusine synthase DHSc. Required for cell growth and survival. This Trypanosoma brucei brucei (strain 927/4 GUTat10.1) protein is Deoxyhypusine synthase regulatory subunit.